The following is a 193-amino-acid chain: Interleukin-18 (193 aa).

Positions Met1–Asp36 are excised as a propeptide.

The protein belongs to the IL-1 family. Forms a ternary complex with ligand-binding receptor subunit IL18R1 and signaling receptor subunit IL18RAP at the plasma membrane. Mature IL18 first binds to IL18R1 forming a low affinity binary complex, which then interacts with IL18RAP to form a high affinity ternary complex that signals inside the cell. Interacts with cargo receptor TMED10; the interaction mediates the translocation from the cytoplasm into the ERGIC (endoplasmic reticulum-Golgi intermediate compartment) and thereby secretion. The pro-IL-18 precursor is processed by CASP1, CASP4 or CASP5 to yield its mature, active form. The pro-IL-18 precursor features autoinhibitory interactions between the propeptide and the post-cleavage-site region, preventing recognition by the IL18R1 receptor. Processing by CASP1, CASP4 or CASP5 induces conformational changes to generate critical receptor-binding sites. The mature form is then secreted and released in the extracellular milieu by passing through the gasdermin-D (GSDMD) pore. In contrast, cleavage by CASP3 inactivates IL18.

It localises to the cytoplasm. It is found in the cytosol. Its subcellular location is the secreted. Pro-inflammatory cytokine primarily involved in epithelial barrier repair, polarized T-helper 1 (Th1) cell and natural killer (NK) cell immune responses. Upon binding to IL18R1 and IL18RAP, forms a signaling ternary complex which activates NF-kappa-B, triggering synthesis of inflammatory mediators. Synergizes with IL12/interleukin-12 to induce IFNG synthesis from T-helper 1 (Th1) cells and natural killer (NK) cells. Involved in transduction of inflammation downstream of pyroptosis: its mature form is specifically released in the extracellular milieu by passing through the gasdermin-D (GSDMD) pore. This is Interleukin-18 (IL18) from Canis lupus familiaris (Dog).